The chain runs to 341 residues: MNIKDALALVVNGKDLSVEQMTDVMREVMTGKATDAQRGAFLVALRIKSETLDEITGAAKVMRELATKVVVNADNLVDTCGTGGDGANLFNVSTASAFVVAAAGGHVAKHGNRSVSSSTGSADVLEAAGVNLQMPADQVARAIETIGVGFMFAPAHHSAMKHAIGPRKELGLRTIFNMLGPMTNPAGVKNQVIGVFTKALCRPMAEVLGRLGSEHVLVVHSEDGLDELSIAAPSHVAEYHKGNVTEYTLSPADVGIEMQSLEGLGVATAEESLALINGAFAGSDEPAAQKAAAIIALNAGAAIYVSGLATSFKDGVAMAEDALATGAAREKLKELVEFSAL.

5-phospho-alpha-D-ribose 1-diphosphate is bound by residues G81, 84-85, 91-94, 109-117, and S121; these read GD, NVST, and KHGNRSVSS. Anthranilate is bound at residue G81. Residue S93 coordinates Mg(2+). N112 provides a ligand contact to anthranilate. R167 provides a ligand contact to anthranilate. Positions 226 and 227 each coordinate Mg(2+).

Belongs to the anthranilate phosphoribosyltransferase family. As to quaternary structure, homodimer. Mg(2+) serves as cofactor.

It catalyses the reaction N-(5-phospho-beta-D-ribosyl)anthranilate + diphosphate = 5-phospho-alpha-D-ribose 1-diphosphate + anthranilate. Its pathway is amino-acid biosynthesis; L-tryptophan biosynthesis; L-tryptophan from chorismate: step 2/5. Catalyzes the transfer of the phosphoribosyl group of 5-phosphorylribose-1-pyrophosphate (PRPP) to anthranilate to yield N-(5'-phosphoribosyl)-anthranilate (PRA). The polypeptide is Anthranilate phosphoribosyltransferase (Saccharophagus degradans (strain 2-40 / ATCC 43961 / DSM 17024)).